Here is a 334-residue protein sequence, read N- to C-terminus: Formamidase (334 aa).

In terms of domain architecture, CN hydrolase spans 14 to 260 (FLVAAIQFPV…WEIVTGEIYP (247 aa)). Glu60 functions as the Proton acceptor in the catalytic mechanism. Residue Lys133 is the Proton donor of the active site. Cys166 serves as the catalytic Nucleophile.

It belongs to the carbon-nitrogen hydrolase superfamily. Aliphatic amidase family.

The enzyme catalyses formamide + H2O = formate + NH4(+). Is an aliphatic amidase with a restricted substrate specificity, as it only hydrolyzes formamide. The polypeptide is Formamidase (Helicobacter pylori (strain J99 / ATCC 700824) (Campylobacter pylori J99)).